Reading from the N-terminus, the 111-residue chain is Rhodanese domain-containing protein CG4456 (111 aa).

Residues 12–110 enclose the Rhodanese domain; that stretch reads NHPDVYLIDV…SWNEWAQKEG (99 aa).

The sequence is that of Rhodanese domain-containing protein CG4456 from Drosophila melanogaster (Fruit fly).